Consider the following 40-residue polypeptide: Ice-structuring protein GS-8 (40 aa).

Met1 carries the post-translational modification Blocked amino end (Met).

It belongs to the type-I AFP family.

Antifreeze proteins lower the blood freezing point. In Myoxocephalus aenaeus (Grubby sculpin), this protein is Ice-structuring protein GS-8.